Reading from the N-terminus, the 363-residue chain is 3-methyl-D-ornithine--L-lysine ligase (363 aa).

Lysine 10 provides a ligand contact to ATP. Position 11–12 (11–12 (LQ)) interacts with L-lysine. Residues aspartate 31, 49–50 (DV), and 72–73 (EN) contribute to the ATP site. Glutamate 72 serves as a coordination point for L-lysine. An ATP-grasp domain is found at 85–269 (EEFSCPVLFD…LIELLFRAFG (185 aa)). Residues lysine 104, lysine 131, serine 138, and 160–163 (EEYV) each bind ADP. Residues 169–171 (SLE) and aspartate 225 each bind D-ornithine. Glutamate 227, glutamate 239, and aspartate 241 together coordinate Mg(2+). Glutamate 239 contacts ADP. Residues 243-248 (RFPSQT) and glutamate 302 contribute to the D-ornithine site. Residues serine 246 and glutamate 302 each contribute to the L-lysine site.

This sequence belongs to the PylC family. Mg(2+) is required as a cofactor.

The catalysed reaction is (3R)-3-methyl-D-ornithine + L-lysine + ATP = (3R)-3-methyl-D-ornithyl-N(6)-L-lysine + ADP + phosphate + H(+). Its pathway is amino-acid biosynthesis; L-pyrrolysine biosynthesis. In terms of biological role, is required for the biosynthesis of pyrrolysine. Catalyzes the ATP-dependent ligation between (3R)-3-methyl-D-ornithine and L-lysine, leading to (3R)-3-methyl-D-ornithyl-N6-L-lysine. The polypeptide is 3-methyl-D-ornithine--L-lysine ligase (Methanosarcina acetivorans (strain ATCC 35395 / DSM 2834 / JCM 12185 / C2A)).